Here is a 338-residue protein sequence, read N- to C-terminus: Sorting nexin-15 (338 aa).

A PX domain is found at 1-131 (MSRRAKKDDF…EFFRGGEVTR (131 aa)). A 1,2-diacyl-sn-glycero-3-phospho-(1D-myo-inositol-3-phosphate)-binding residues include R52, S54, R88, and R97. R106 is subject to Omega-N-methylarginine. The tract at residues 134–155 (EVSRDLQILPPPLIPTPPSDEA) is disordered. A compositionally biased stretch (pro residues) spans 142–151 (LPPPLIPTPP). Residues S202 and S228 each carry the phosphoserine modification. Positions 240-270 (VQSKRLDQEPWEPGGREEEEAEDGDPAPAYL) are disordered. The MIT domain occupies 266–338 (APAYLGQATE…RAETLHAHLP (73 aa)).

Belongs to the sorting nexin family. In terms of assembly, homodimer. Interacts with SNX1, SNX2 and SNX4.

The protein resides in the cytoplasm. It is found in the membrane. It localises to the cytoplasmic vesicle membrane. May be involved in several stages of intracellular trafficking. Overexpression of SNX15 disrupts the normal trafficking of proteins from the plasma membrane to recycling endosomes or the TGN. This Rattus norvegicus (Rat) protein is Sorting nexin-15 (Snx15).